Reading from the N-terminus, the 192-residue chain is MAVPASPQHPRGYGILLLTLLMKALAAAAACNHLRPQDATFSRDSLQLLRDMAPSPPQPCPQHNAPCSFNDTVLDTNNTQQADKTTHNILQHLFKILSGPTTPAHWIDSQRQSLLNQIQRYAQHLEQCLADSHTRSRTRWPHNPHLTINKHFSCLHAFLHDNDYSACAWDHVRLRARAWLLHIHDLVRNTRT.

A signal peptide spans 1 to 30 (MAVPASPQHPRGYGILLLTLLMKALAAAAA). 3 disulfides stabilise this stretch: cysteine 31–cysteine 128, cysteine 60–cysteine 154, and cysteine 67–cysteine 167. Residues asparagine 70 and asparagine 77 are each glycosylated (N-linked (GlcNAc...) asparagine).

This sequence belongs to the alpha/beta interferon family.

The protein resides in the secreted. Has antiviral activities. The polypeptide is Interferon (Meleagris gallopavo (Wild turkey)).